The following is a 632-amino-acid chain: Arginine--tRNA ligase (632 aa).

A 'HIGH' region motif is present at residues alanine 129–serine 139.

The protein belongs to the class-I aminoacyl-tRNA synthetase family.

The protein resides in the cytoplasm. It carries out the reaction tRNA(Arg) + L-arginine + ATP = L-arginyl-tRNA(Arg) + AMP + diphosphate. The polypeptide is Arginine--tRNA ligase (Korarchaeum cryptofilum (strain OPF8)).